The sequence spans 197 residues: Adenylate kinase (197 aa).

Residue 19–24 (GSGKGT) coordinates ATP. Positions 39–68 (SSGDLLRAEVQSGSPKGKELKAMMERGELV) are NMP. Residues Ser-40, Arg-45, 66-68 (ELV), 95-98 (RYPR), and Gln-102 each bind AMP. The segment at 132-142 (KRAETSNRVDD) is LID. Residue Arg-133 coordinates ATP. AMP-binding residues include Arg-139 and Arg-150. Gly-178 contributes to the ATP binding site.

The protein belongs to the adenylate kinase family. In terms of assembly, monomer.

It localises to the cytoplasm. The catalysed reaction is AMP + ATP = 2 ADP. Its function is as follows. Catalyzes the reversible transfer of the terminal phosphate group between ATP and AMP. Plays an important role in cellular energy homeostasis and in adenine nucleotide metabolism. This Schistosoma mansoni (Blood fluke) protein is Adenylate kinase.